Here is a 204-residue protein sequence, read N- to C-terminus: E3 ubiquitin-protein ligase MPSR1 (204 aa).

An RING-type; atypical zinc finger spans residues 113 to 154 (CVICLEEWKSEETVKEMPCKHRFHGGCIEKWLGFHGSCPVCR).

Post-translationally, autoubiquitinated.

It is found in the cytoplasm. It catalyses the reaction S-ubiquitinyl-[E2 ubiquitin-conjugating enzyme]-L-cysteine + [acceptor protein]-L-lysine = [E2 ubiquitin-conjugating enzyme]-L-cysteine + N(6)-ubiquitinyl-[acceptor protein]-L-lysine.. E3 ubiquitin-protein ligase involved in protein quality control (PQC) under proteotoxic stress. Is essential to plant survival under proteotoxic stress. Functions by removing damaged proteins before they form cytotoxic aggregates. Recognizes misfolded proteins selectively and tethers polyubiquitin chains to the proteins directly for subsequent degradation by the 26S proteasome pathway. Targets misfolded proteins independently of cytoplasmic chaperones. Associates with the 26S proteasome and sustains the structural integrity of the proteasome complex at the initial stage of proteotoxic stress. Under normal conditions, MPSR1 becomes highly unstable by its autoubiquitination activity and is stabilized during proteotoxic stress by conjugating ubiquitins on misfolded proteins. The chain is E3 ubiquitin-protein ligase MPSR1 from Arabidopsis thaliana (Mouse-ear cress).